Reading from the N-terminus, the 45-residue chain is Large ribosomal subunit protein bL36 (45 aa).

The tract at residues 1-45 (MKVSSSIKADPSKGDKLVRRKGRLYVINKKDPNRKQRQAGPARKK) is disordered.

It belongs to the bacterial ribosomal protein bL36 family.

This is Large ribosomal subunit protein bL36 from Chlamydia caviae (strain ATCC VR-813 / DSM 19441 / 03DC25 / GPIC) (Chlamydophila caviae).